We begin with the raw amino-acid sequence, 461 residues long: Ufm1-specific protease 2 (461 aa).

Active-site residues include cysteine 294, aspartate 418, and histidine 420.

This sequence belongs to the peptidase C78 family.

It localises to the endoplasmic reticulum. It is found in the cytoplasm. The protein resides in the nucleus. Its function is as follows. Thiol-dependent isopeptidase that specifically cleaves UFM1, a ubiquitin-like modifier protein, from conjugated proteins, such as CD274/PD-L1, CYB5R3, DDRGK1, MRE11, RPL26/uL24, TRIP4 and RPL26/uL24. While it is also able to mediate the processing of UFM1 precursors, a prerequisite for conjugation reactions, UFSP2 mainly acts as a protein deUFMylase that mediates deconjugation of UFM1 from target proteins. Mediates deUFMylation of RPL26/uL24, a critical step to release the UFM1 ribosome E3 ligase (UREL) complex during the recycling of 60S ribosome subunits from the endoplasmic reticulum. Catalyzes deUFMylation of TRIP4, regulating intracellular nuclear receptors transactivation and thereby regulate cell proliferation and differentiation. In Rattus norvegicus (Rat), this protein is Ufm1-specific protease 2.